The primary structure comprises 632 residues: 2-oxoacid:ferredoxin oxidoreductase subunit alpha (632 aa).

The YPITP motif signature appears at 254-258; that stretch reads YPITP. The substrate site is built by Thr257 and Arg345.

In terms of assembly, heterodimer composed of an alpha and a beta subunit.

It carries out the reaction a 2-oxocarboxylate + 2 oxidized [2Fe-2S]-[ferredoxin] + CoA = an acyl-CoA + 2 reduced [2Fe-2S]-[ferredoxin] + CO2 + H(+). Functionally, catalyzes the coenzyme A-dependent oxidative decarboxylation of different 2-oxoacids such as 2-oxoglutarate, pyruvate and 2-oxobutyrate to form their CoA derivatives. This chain is 2-oxoacid:ferredoxin oxidoreductase subunit alpha, found in Saccharolobus solfataricus (Sulfolobus solfataricus).